Here is an 877-residue protein sequence, read N- to C-terminus: Bifunctional uridylyltransferase/uridylyl-removing enzyme (877 aa).

The segment at 1–335 (MDGPNSDRAH…HRDDAFSPTP (335 aa)) is uridylyltransferase. Positions 336 to 695 (VNDHFQAVND…LRPESLRGSV (360 aa)) are uridylyl-removing. Residues 454-576 (VDEHTLFVVR…VRNQNTLNHL (123 aa)) form the HD domain. ACT domains follow at residues 696–778 (EVFI…AVSR) and 805–877 (ILEL…VGDQ).

The protein belongs to the GlnD family. Mg(2+) serves as cofactor.

The catalysed reaction is [protein-PII]-L-tyrosine + UTP = [protein-PII]-uridylyl-L-tyrosine + diphosphate. It carries out the reaction [protein-PII]-uridylyl-L-tyrosine + H2O = [protein-PII]-L-tyrosine + UMP + H(+). Its activity is regulated as follows. Uridylyltransferase (UTase) activity is inhibited by glutamine, while glutamine activates uridylyl-removing (UR) activity. Its function is as follows. Modifies, by uridylylation and deuridylylation, the PII regulatory proteins (GlnB and homologs), in response to the nitrogen status of the cell that GlnD senses through the glutamine level. Under low glutamine levels, catalyzes the conversion of the PII proteins and UTP to PII-UMP and PPi, while under higher glutamine levels, GlnD hydrolyzes PII-UMP to PII and UMP (deuridylylation). Thus, controls uridylylation state and activity of the PII proteins, and plays an important role in the regulation of nitrogen fixation and metabolism. This is Bifunctional uridylyltransferase/uridylyl-removing enzyme from Methylococcus capsulatus (strain ATCC 33009 / NCIMB 11132 / Bath).